We begin with the raw amino-acid sequence, 236 residues long: RNA-binding protein 24 (236 aa).

Residues 11–88 (TKIFVGGLPY…RKANVNLAYL (78 aa)) form the RRM domain. The interval 175-199 (QYPYAASPAAAGYVTAGGYGYAVQQ) is necessary for interaction with EIF4E.

In terms of assembly, interacts with EIF4E; this interaction prevents EIF4E from binding to p53/TP53 mRNA and inhibits the assembly of translation initiation complex. As to quaternary structure, (Microbial infection) Interacts with HCV mature core protein; this interaction, which enhances the interaction of Core with 5'-UTR may favor viral replication over translation. (Microbial infection) Interacts with HCV Serine protease/helicase NS3. Expressed in fetal and adult heart and skeletal muscles.

The protein localises to the nucleus. Its subcellular location is the cytoplasm. Multifunctional RNA-binding protein involved in the regulation of pre-mRNA splicing, mRNA stability and mRNA translation important for cell fate decision and differentiation. Plays a major role in pre-mRNA alternative splicing regulation. Mediates preferentially muscle-specific exon inclusion in numerous mRNAs important for striated cardiac and skeletal muscle cell differentiation. Binds to intronic splicing enhancer (ISE) composed of stretches of GU-rich motifs localized in flanking intron of exon that will be included by alternative splicing. Involved in embryonic stem cell (ESC) transition to cardiac cell differentiation by promoting pre-mRNA alternative splicing events of several pluripotency and/or differentiation genes. Plays a role in the regulation of mRNA stability. Binds to 3'-untranslated region (UTR) AU-rich elements in target transcripts, such as CDKN1A and MYOG, leading to maintain their stabilities. Involved in myogenic differentiation by regulating MYOG levels. Binds to multiple regions in the mRNA 3'-UTR of TP63 isoform 2, hence inducing its destabilization. Also promotes the destabilization of the CHRM2 mRNA via its binding to a region in the coding sequence. Plays a role in the regulation of mRNA translation. Mediates repression of p53/TP53 mRNA translation through its binding to U-rich element in the 3'-UTR, hence preventing EIF4E from binding to p53/TP53 mRNA and translation initiation. Binds to a huge amount of mRNAs. Required for embryonic heart development, sarcomer and M-band formation in striated muscles. Together with RBM20, promotes the expression of short isoforms of PDLIM5/ENH in cardiomyocytes. Its function is as follows. (Microbial infection) Promotes hepatitis C virus (HCV) replication over translation through the inhibition of viral protein expression. Decreases viral translation by linking viral 5'- and 3'-UTRs, blocking 80S ribosome assembly on the viral IRES and enhancing the interaction of the mature core protein and 5'-UTR. This chain is RNA-binding protein 24, found in Homo sapiens (Human).